The primary structure comprises 95 residues: uncharacterized protein (95 aa).

This is an uncharacterized protein from Homo sapiens (Human).